The sequence spans 273 residues: Large ribosomal subunit protein uL2 (273 aa).

Residues 228–273 are disordered; that stretch reads VDHPHGGGEGKTSGGRHPVTPWGFPTKGKKTRKNKRTSKFIVKKRK. The span at 254–273 shows a compositional bias: basic residues; that stretch reads KGKKTRKNKRTSKFIVKKRK.

Belongs to the universal ribosomal protein uL2 family. As to quaternary structure, part of the 50S ribosomal subunit. Forms a bridge to the 30S subunit in the 70S ribosome.

Its function is as follows. One of the primary rRNA binding proteins. Required for association of the 30S and 50S subunits to form the 70S ribosome, for tRNA binding and peptide bond formation. It has been suggested to have peptidyltransferase activity; this is somewhat controversial. Makes several contacts with the 16S rRNA in the 70S ribosome. The polypeptide is Large ribosomal subunit protein uL2 (Rickettsia peacockii (strain Rustic)).